The primary structure comprises 106 residues: Large ribosomal subunit protein uL23 (106 aa).

This sequence belongs to the universal ribosomal protein uL23 family. In terms of assembly, part of the 50S ribosomal subunit. Contacts protein L29, and trigger factor when it is bound to the ribosome.

Its function is as follows. One of the early assembly proteins it binds 23S rRNA. One of the proteins that surrounds the polypeptide exit tunnel on the outside of the ribosome. Forms the main docking site for trigger factor binding to the ribosome. The chain is Large ribosomal subunit protein uL23 from Acinetobacter baumannii (strain SDF).